We begin with the raw amino-acid sequence, 131 residues long: Lysosomal enzyme trafficking factor (131 aa).

2 helical membrane-spanning segments follow: residues 8–28 (MGWI…YYVF) and 66–86 (LPFW…FLFL).

Belongs to the LYSET family.

The protein resides in the golgi apparatus membrane. In terms of biological role, required for mannose-6-phosphate-dependent trafficking of lysosomal enzymes. LYSET bridges GlcNAc-1-phosphate transferase (GNPTAB), to the membrane-bound transcription factor site-1 protease (MBTPS1), thus allowing proteolytic activation of the GNPTAB. GNPTAB is involved in the regulation of M6P-dependent Golgi-to-lysosome trafficking of lysosomal enzymes. LYSET is thus an essential factor for maturation and delivery of lysosomal hydrolases. The sequence is that of Lysosomal enzyme trafficking factor (lyset-b) from Xenopus laevis (African clawed frog).